The chain runs to 584 residues: ATP-dependent ubiquitin transferase-like protein Cap2 (584 aa).

The E2-like domain stretch occupies residues 1 to 137 (MKQELHHTLL…SGTSNDVELE (137 aa)). C90 serves as the catalytic For E2-like domain. A linker domain region spans residues 138 to 338 (GEFSAYWQSE…LLSRNQSRPD (201 aa)). The segment at 339-584 (VGNLSQKRIA…RFSGCNICDE (246 aa)) is adenylation plus E1-like domain. C522 functions as the For E1-like domain in the catalytic mechanism.

It in the C-terminal section; belongs to the HesA/MoeB/ThiF family. Interacts with CD-NTase DncV in the presence and absence of phage T2. A Cap2 dimer is bound on either side by a DncV monomer.

CD-NTase priming component of a CBASS antiviral system. CBASS (cyclic oligonucleotide-based antiphage signaling system) provides immunity against bacteriophages. The CD-NTase protein (DncV) synthesizes cyclic nucleotides in response to infection; these serve as specific second messenger signals. The signals activate a diverse range of effectors, leading to bacterial cell death and thus abortive phage infection. A type II-A(GA) CBASS system. Its function is as follows. Primes DncV; acts as a protein transferase, conjugating DncV, the CD-NTase, to unidentified target(s) in the cell via an E1-E2 ubiquitin transferase-like mechanism. During the conjugation reaction DncV is probably transiently attached to AMP. Protein conjugation requires ATP. Functionally, protects E.coli against phage infection. When the CBASS operon (capV-dncV-cap2-cap3) is introduced in E.coli MG1655 there is about 100-fold protection against phages P1 and T2. When the operon is introduced in E.coli MG1655 there is a more than 10(3) decrease in the efficiency of T2 plaque formation. Protects 100-fold against phage T5, offers no protection against T7. When the operon is introduced in E.coli MG1655 it protects against phages T2, T4, T5 and T6. Another paper shows the operon confers protection against phages P1, T2, T5 and T6 but not T4 or lambda. This chain is ATP-dependent ubiquitin transferase-like protein Cap2, found in Vibrio cholerae serotype O1 (strain ATCC 39315 / El Tor Inaba N16961).